The primary structure comprises 155 residues: Small ribosomal subunit protein uS7 (155 aa).

Belongs to the universal ribosomal protein uS7 family. In terms of assembly, part of the 30S ribosomal subunit. Contacts proteins S9 and S11.

One of the primary rRNA binding proteins, it binds directly to 16S rRNA where it nucleates assembly of the head domain of the 30S subunit. Is located at the subunit interface close to the decoding center, probably blocks exit of the E-site tRNA. The protein is Small ribosomal subunit protein uS7 of Mycoplasma pneumoniae (strain ATCC 29342 / M129 / Subtype 1) (Mycoplasmoides pneumoniae).